Here is a 245-residue protein sequence, read N- to C-terminus: Homeobox protein goosecoid (245 aa).

Residues lysine 150–lysine 209 constitute a DNA-binding region (homeobox). Residues alanine 203–serine 245 form a disordered region. The segment covering alanine 219–threonine 228 has biased composition (polar residues). The segment covering serine 229–serine 245 has biased composition (basic and acidic residues).

Belongs to the paired homeobox family. Bicoid subfamily.

Its subcellular location is the nucleus. Its function is as follows. Involved in the development of the organizer region in the gastrula (Hensen node in chicken). This chain is Homeobox protein goosecoid (GSC), found in Gallus gallus (Chicken).